A 154-amino-acid chain; its full sequence is MQSNMQLEPNFWQTKSLLEMTESEWEALCDGCGKCCYRKYIQGRSKRQKLYYTRIACNLLDVETGKCGNYSERFNIETDCTKLTKKNLPDFHWLPDTCAYRLLYEGKTLPEWHPLISGSPHSVKNADILIKNGIHERDVIDWFEFIIDEDHTFK.

This sequence belongs to the UPF0260 family.

The polypeptide is UPF0260 protein NTHI1811 (Haemophilus influenzae (strain 86-028NP)).